The sequence spans 459 residues: MYTHMEYLQRCFYKSTSWNEDNIYANVTATSQALLDFSIPSGAKLDVSTQATDHSASSMSLSNMHTINGSLAYLFSSTPLKNTMGTRDVSLQDAVAGFRIIEPFFSGTHTKTDSSDVNRASLLYGRMYFPGTALEAMLIKRISASAQLLVKCINNPHIRKGGTMIVYLQENTPRFSREYIYSTNEALFGFRCLYNFGKPTKISPALIPKFDNSVVSVGAEFWYAALGMSPGLSTAVRYSTRSTSTGKPLTMTLACNPILGHISSTYNVKTSVSSTVCSKYDFNWFSYASNLSIGFELYNFFKPSHVFKHYHADQRRNPSIHHDTLAPVADPYVLGTRPTNNSVSYAFPEKPRKRVVNSIQNLDDYYHINPSRLHRSPAYDVDDDVSGRSVMEAFQNSVNESNFSSVLKGSTSLSDRMVKLLWVGRYKDFLVSTGIKVNLNPFTNLPEINKIGVTFSYAC.

This sequence belongs to the MDM10 family. Component of the ER-mitochondria encounter structure (ERMES) or MDM complex, composed of MMM1, MDM10, MDM12 and MDM34. Associates with the mitochondrial outer membrane sorting assembly machinery SAM(core) complex.

Its subcellular location is the mitochondrion outer membrane. Its function is as follows. Component of the ERMES/MDM complex, which serves as a molecular tether to connect the endoplasmic reticulum and mitochondria. Components of this complex are involved in the control of mitochondrial shape and protein biogenesis and may function in phospholipid exchange. MDM10 is involved in the late assembly steps of the general translocase of the mitochondrial outer membrane (TOM complex). Functions in the TOM40-specific route of the assembly of outer membrane beta-barrel proteins, including the association of TOM40 with the receptor TOM22 and small TOM proteins. Can associate with the SAM(core) complex as well as the MDM12-MMM1 complex, both involved in late steps of the major beta-barrel assembly pathway, that is responsible for biogenesis of all outer membrane beta-barrel proteins. May act as a switch that shuttles between both complexes and channels precursor proteins into the TOM40-specific pathway. Plays a role in mitochondrial morphology and in the inheritance of mitochondria. The protein is Mitochondrial distribution and morphology protein 10 of Clavispora lusitaniae (strain ATCC 42720) (Yeast).